A 289-amino-acid chain; its full sequence is Oxaloacetate decarboxylase (289 aa).

Ser-47 is a binding site for substrate. Residue Asp-85 participates in Mg(2+) binding. Arg-156 and His-232 together coordinate substrate.

Belongs to the isocitrate lyase/PEP mutase superfamily. Oxaloacetate decarboxylase family. In terms of assembly, homotetramer; dimer of dimers. Mg(2+) serves as cofactor.

The catalysed reaction is oxaloacetate + H(+) = pyruvate + CO2. Catalyzes the decarboxylation of oxaloacetate into pyruvate. Seems to play a role in maintaining cellular concentrations of bicarbonate and pyruvate. The chain is Oxaloacetate decarboxylase from Rhodopseudomonas palustris (strain HaA2).